A 491-amino-acid chain; its full sequence is ADP-specific phosphofructokinase (491 aa).

The ADPK domain maps to 4-486 (EEWEQRHAEA…FVAMLAKIKQ (483 aa)). Residues E281, E312, and D470 each coordinate Mg(2+). D470 (proton acceptor) is an active-site residue.

The protein belongs to the carbohydrate kinase PfkC family. The cofactor is Mg(2+).

It localises to the cytoplasm. The enzyme catalyses beta-D-fructose 6-phosphate + ADP = beta-D-fructose 1,6-bisphosphate + AMP + H(+). It participates in carbohydrate degradation; glycolysis. Functionally, catalyzes the phosphorylation of fructose 6-phosphate to fructose 1,6-bisphosphate using ADP as the phosphate donor. This chain is ADP-specific phosphofructokinase, found in Methanosarcina acetivorans (strain ATCC 35395 / DSM 2834 / JCM 12185 / C2A).